The following is a 276-amino-acid chain: Large ribosomal subunit protein uL2 (276 aa).

A disordered region spans residues 224–276; sequence VMNPVDHPHGGGEGKAPIGRKSPMTPWGKPTLGFKTRKKKNKSDKFIIRRRKK. The span at 258 to 276 shows a compositional bias: basic residues; sequence KTRKKKNKSDKFIIRRRKK.

It belongs to the universal ribosomal protein uL2 family. As to quaternary structure, part of the 50S ribosomal subunit. Forms a bridge to the 30S subunit in the 70S ribosome.

One of the primary rRNA binding proteins. Required for association of the 30S and 50S subunits to form the 70S ribosome, for tRNA binding and peptide bond formation. It has been suggested to have peptidyltransferase activity; this is somewhat controversial. Makes several contacts with the 16S rRNA in the 70S ribosome. This is Large ribosomal subunit protein uL2 from Geobacillus sp. (strain WCH70).